The chain runs to 89 residues: Small ribosomal subunit protein uS15 (89 aa).

It belongs to the universal ribosomal protein uS15 family. Part of the 30S ribosomal subunit. Forms a bridge to the 50S subunit in the 70S ribosome, contacting the 23S rRNA.

Its function is as follows. One of the primary rRNA binding proteins, it binds directly to 16S rRNA where it helps nucleate assembly of the platform of the 30S subunit by binding and bridging several RNA helices of the 16S rRNA. Functionally, forms an intersubunit bridge (bridge B4) with the 23S rRNA of the 50S subunit in the ribosome. In Methylorubrum extorquens (strain CM4 / NCIMB 13688) (Methylobacterium extorquens), this protein is Small ribosomal subunit protein uS15.